A 174-amino-acid polypeptide reads, in one-letter code: D(1B) dopamine receptor (174 aa).

Residues 1 to 10 form a helical membrane-spanning segment; that stretch reads SILNLCIISV. Topologically, residues 11-32 are cytoplasmic; the sequence is DRYWAISRPFCYERKMTQRVAL. Residues 33-54 traverse the membrane as a helical segment; it reads VMVGLAWTLSILISFIPVQLHW. Residues 55-96 are Extracellular-facing; the sequence is HRDKVGSRDGLDPPSNLANGTPWEEAGESDRSAENCDSSLNR. Positions 64-88 are disordered; it reads GLDPPSNLANGTPWEEAGESDRSAE. Asparagine 95 carries N-linked (GlcNAc...) asparagine glycosylation. A helical membrane pass occupies residues 97–119; sequence TYAISSSLISFYIPVAIMIVTYT. Residues 120 to 169 are Cytoplasmic-facing; sequence RIYRIAQVQIRRISSLERAAEHAQSCRSREACAPDSGLRASIKKETKVLK. A helical membrane pass occupies residues 170–174; that stretch reads TLSVI.

The protein belongs to the G-protein coupled receptor 1 family.

Its subcellular location is the cell membrane. Dopamine receptor whose activity is mediated by G proteins which activate adenylyl cyclase. This is D(1B) dopamine receptor (DRD5) from Bos taurus (Bovine).